The primary structure comprises 349 residues: Inositol 2-dehydrogenase (349 aa).

Belongs to the Gfo/Idh/MocA family. Homotetramer.

It carries out the reaction myo-inositol + NAD(+) = scyllo-inosose + NADH + H(+). Involved in the oxidation of myo-inositol (MI) to 2-keto-myo-inositol (2KMI or 2-inosose). This chain is Inositol 2-dehydrogenase, found in Mycolicibacterium gilvum (strain PYR-GCK) (Mycobacterium gilvum (strain PYR-GCK)).